The chain runs to 64 residues: Large ribosomal subunit protein uL30 (64 aa).

Belongs to the universal ribosomal protein uL30 family. As to quaternary structure, part of the 50S ribosomal subunit.

In Rhodopseudomonas palustris (strain BisA53), this protein is Large ribosomal subunit protein uL30.